A 418-amino-acid polypeptide reads, in one-letter code: Outer membrane protein assembly factor BamB (418 aa).

A signal peptide spans 1 to 28 (MFHNTCGRKGRFARAMGMALAISVTLSG). Residue Cys29 is the site of N-palmitoyl cysteine attachment. A lipid anchor (S-diacylglycerol cysteine) is attached at Cys29.

This sequence belongs to the BamB family. As to quaternary structure, part of the Bam complex.

It localises to the cell outer membrane. Functionally, part of the outer membrane protein assembly complex, which is involved in assembly and insertion of beta-barrel proteins into the outer membrane. In Alteromonas naphthalenivorans, this protein is Outer membrane protein assembly factor BamB.